Reading from the N-terminus, the 214-residue chain is DELTA-actitoxin-Aeq1b (214 aa).

Residues 1-19 (MSRLIIVFIVVTMICAATA) form the signal peptide. Residues 20 to 35 (LSSKKSINEDEKDEKR) constitute a propeptide that is removed on maturation. Residues 38 to 47 (AVAGAVIEGA) form a plays an important role in the hemolytic activity region. The interval 46–65 (GATLTFNVLQTVLKALGDIS) is N-terminal region. The phosphocholine site is built by serine 89, valine 122, serine 140, proline 142, tyrosine 168, tyrosine 172, and tyrosine 173. Residues 140 to 155 (SIPFDYNLYSNWWNVK) form a trp-rich region, which is important for the binding to lipid membrane region. The Cell attachment site, crucial for protein stability motif lies at 179 to 181 (RGD).

Belongs to the actinoporin family. Sea anemone subfamily. As to quaternary structure, octamer or nonamer in membranes. Monomer in the soluble state.

It is found in the secreted. It localises to the nematocyst. The protein resides in the target cell membrane. In terms of biological role, pore-forming protein that forms cations-selective hydrophilic pores of around 1 nm and causes cytolysis. Pore formation is a multi-step process that involves specific recognition of membrane sphingomyelin (but neither cholesterol nor phosphatidylcholine) using aromatic rich region and adjacent phosphocholine (POC) binding site, firm binding to the membrane (mainly driven by hydrophobic interactions) accompanied by the transfer of the N-terminal region to the lipid-water interface and finally pore formation after oligomerization of monomers. The polypeptide is DELTA-actitoxin-Aeq1b (Actinia equina (Beadlet anemone)).